A 222-amino-acid polypeptide reads, in one-letter code: Sigma non-opioid intracellular receptor 1 (222 aa).

Topologically, residues 1–7 (MGVAGPW) are lumenal. Residues 8–29 (VLRVGLGLGAFALLLQGLRGWL) form a helical membrane-spanning segment. The Cytoplasmic portion of the chain corresponds to 30 to 222 (ACKRYEFQPA…ASAFFSTLGC (193 aa)). The important for ligand-binding stretch occupies residues 98-105 (SLTEYVLL). The segment at 176–222 (FVPSTLAFALADTLFSTQDFITLFYTLRAYTKGLLLEASAFFSTLGC) is C-terminal hydrophobic region.

This sequence belongs to the ERG2 family. Homotrimer.

It is found in the nucleus inner membrane. Its subcellular location is the nucleus outer membrane. The protein localises to the nucleus envelope. The protein resides in the cytoplasmic vesicle. It localises to the endoplasmic reticulum membrane. It is found in the membrane. Functionally, may function in lipid transport from the endoplasmic reticulum and be involved in a wide array of cellular functions probably through regulation of the biogenesis of lipid microdomains at the plasma membrane. May regulate calcium efflux at the endoplasmic reticulum. This Gallus gallus (Chicken) protein is Sigma non-opioid intracellular receptor 1 (SIGMAR1).